A 528-amino-acid chain; its full sequence is MASKSTDISAIIKDRIRRFDSKIDYSEIGYIVTIGDGIALVNGLDNAKNGEIVKFKNNITGLVLNLEEEVVGVAIFGDANMLSEADLCTRTGEVIAVPVGDELTGRVINAIGNPIDGKGPINSTKRREIFKVAPGVMSRVEVNEPLETGIIAIDSMIPIGKGQRELIIGDRQTGKTSIAIDTIINQKDKNVKCIYVAIGQKNSTVAQITKKLQDSGAMEYTTVIVSGASELAPQQYIAPYSGTAIAEEWMSEGKDCLIIYDDLSKHAIAYRTLSLLLRRPPGREAYPGDVFYLHSQLLERAAKVNYSYGGGSITALPIIETQQGDISAYIPTNVISITDGQIFTRENLFHSGQRPAVDVGFSVSRVGSSAQIKAMKEVSSSLKLELAQYNEMQAFAQFGSDLDDSTIAILKHGHKVYELLKQEQYYPINQLAQTAILLGVKEKIINPLPASQLRRYRDEVIKFMTKELEGIKIGEKIKQNNNALNSSIKEEITTHLVKIVNKIIASLHDYKPEAELPMPAKYLEINNV.

Residue 169-176 coordinates ATP; sequence GDRQTGKT.

The protein belongs to the ATPase alpha/beta chains family. F-type ATPases have 2 components, CF(1) - the catalytic core - and CF(0) - the membrane proton channel. CF(1) has five subunits: alpha(3), beta(3), gamma(1), delta(1), epsilon(1). CF(0) has three main subunits: a(1), b(2) and c(9-12). The alpha and beta chains form an alternating ring which encloses part of the gamma chain. CF(1) is attached to CF(0) by a central stalk formed by the gamma and epsilon chains, while a peripheral stalk is formed by the delta and b chains.

The protein resides in the cell membrane. It catalyses the reaction ATP + H2O + 4 H(+)(in) = ADP + phosphate + 5 H(+)(out). Its function is as follows. Produces ATP from ADP in the presence of a proton gradient across the membrane. The alpha chain is a regulatory subunit. The polypeptide is ATP synthase subunit alpha (Mycoplasmopsis agalactiae (strain NCTC 10123 / CIP 59.7 / PG2) (Mycoplasma agalactiae)).